A 308-amino-acid polypeptide reads, in one-letter code: Ribonuclease HIII (308 aa).

The RNase H type-2 domain occupies 91 to 308 (KNVIGSDEVG…TEKALKMVKK (218 aa)). A divalent metal cation-binding residues include D97, E98, and D202.

It belongs to the RNase HII family. RnhC subfamily. It depends on Mn(2+) as a cofactor. Mg(2+) is required as a cofactor.

The protein localises to the cytoplasm. The catalysed reaction is Endonucleolytic cleavage to 5'-phosphomonoester.. Its function is as follows. Endonuclease that specifically degrades the RNA of RNA-DNA hybrids. The polypeptide is Ribonuclease HIII (Listeria monocytogenes serovar 1/2a (strain ATCC BAA-679 / EGD-e)).